A 459-amino-acid chain; its full sequence is Cell division protein FtsZ (459 aa).

GTP is bound by residues 25-29, 112-114, E143, R147, and D191; these read GAGSN and GTG. Disordered regions lie at residues 383 to 405 and 427 to 459; these read DQAP…DAGE and IPER…KKRD.

It belongs to the FtsZ family. In terms of assembly, homodimer. Polymerizes to form a dynamic ring structure in a strictly GTP-dependent manner. Interacts directly with several other division proteins.

Its subcellular location is the cytoplasm. Functionally, essential cell division protein that forms a contractile ring structure (Z ring) at the future cell division site. The regulation of the ring assembly controls the timing and the location of cell division. One of the functions of the FtsZ ring is to recruit other cell division proteins to the septum to produce a new cell wall between the dividing cells. Binds GTP and shows GTPase activity. The chain is Cell division protein FtsZ from Rickettsia bellii (strain RML369-C).